Reading from the N-terminus, the 116-residue chain is Ribosome-binding factor A (116 aa).

The protein belongs to the RbfA family. Monomer. Binds 30S ribosomal subunits, but not 50S ribosomal subunits or 70S ribosomes.

The protein localises to the cytoplasm. Its function is as follows. One of several proteins that assist in the late maturation steps of the functional core of the 30S ribosomal subunit. Associates with free 30S ribosomal subunits (but not with 30S subunits that are part of 70S ribosomes or polysomes). Required for efficient processing of 16S rRNA. May interact with the 5'-terminal helix region of 16S rRNA. This Streptococcus equi subsp. zooepidemicus (strain H70) protein is Ribosome-binding factor A.